Consider the following 79-residue polypeptide: Sec-independent protein translocase protein TatA (79 aa).

The chain crosses the membrane as a helical span at residues 1–21 (MGSLSIWHWIVVIAVVLLLFG). Basic and acidic residues predominate over residues 42-60 (GLQDDEKTAEKPDAVKSLD). The interval 42–79 (GLQDDEKTAEKPDAVKSLDHNATTGTPPNRTDVGSKAV) is disordered. The span at 61–70 (HNATTGTPPN) shows a compositional bias: polar residues.

It belongs to the TatA/E family. In terms of assembly, the Tat system comprises two distinct complexes: a TatABC complex, containing multiple copies of TatA, TatB and TatC subunits, and a separate TatA complex, containing only TatA subunits. Substrates initially bind to the TatABC complex, which probably triggers association of the separate TatA complex to form the active translocon.

It localises to the cell inner membrane. Functionally, part of the twin-arginine translocation (Tat) system that transports large folded proteins containing a characteristic twin-arginine motif in their signal peptide across membranes. TatA could form the protein-conducting channel of the Tat system. The chain is Sec-independent protein translocase protein TatA from Rhodopseudomonas palustris (strain HaA2).